A 393-amino-acid polypeptide reads, in one-letter code: NAD(P)H-quinone oxidoreductase subunit H, chloroplastic (393 aa).

This sequence belongs to the complex I 49 kDa subunit family. As to quaternary structure, NDH is composed of at least 16 different subunits, 5 of which are encoded in the nucleus.

The protein resides in the plastid. Its subcellular location is the chloroplast thylakoid membrane. The enzyme catalyses a plastoquinone + NADH + (n+1) H(+)(in) = a plastoquinol + NAD(+) + n H(+)(out). It carries out the reaction a plastoquinone + NADPH + (n+1) H(+)(in) = a plastoquinol + NADP(+) + n H(+)(out). Its function is as follows. NDH shuttles electrons from NAD(P)H:plastoquinone, via FMN and iron-sulfur (Fe-S) centers, to quinones in the photosynthetic chain and possibly in a chloroplast respiratory chain. The immediate electron acceptor for the enzyme in this species is believed to be plastoquinone. Couples the redox reaction to proton translocation, and thus conserves the redox energy in a proton gradient. This is NAD(P)H-quinone oxidoreductase subunit H, chloroplastic from Crucihimalaya wallichii (Rock-cress).